The following is a 140-amino-acid chain: Transmembrane protein 107 (140 aa).

A run of 2 helical transmembrane segments spans residues L7–W27 and L53–S73. N79 is a glycosylation site (N-linked (GlcNAc...) asparagine). 2 helical membrane-spanning segments follow: residues S83–E103 and I113–F133.

In terms of assembly, part of the tectonic-like complex (also named B9 complex). Interacts with TMEM237, TMEM231, MKS1 and TMEM216.

Its subcellular location is the membrane. The protein localises to the cell projection. The protein resides in the cilium. Plays a role in cilia formation and embryonic patterning. Requires for normal Sonic hedgehog (Shh) signaling in the neural tube and acts in combination with GLI2 and GLI3 to pattern ventral and intermediate neuronal cell types. During ciliogenesis regulates the ciliary transition zone localization of some MKS complex proteins. The sequence is that of Transmembrane protein 107 from Mus musculus (Mouse).